A 1016-amino-acid chain; its full sequence is Probably inactive leucine-rich repeat receptor-like protein kinase At3g28040 (1016 aa).

The first 26 residues, Met1–Gly26, serve as a signal peptide directing secretion. At Asp27 to Ser646 the chain is on the extracellular side. LRR repeat units follow at residues Arg102 to Asn124, His125 to Ile147, Ser149 to Asn171, Ser174 to Cys196, Val198 to Ile219, Arg224 to Ser245, Asn248 to Cys270, His272 to Lys295, Ser296 to Met318, Gly320 to Leu342, Ser344 to Cys366, Glu368 to Leu390, Gly391 to Leu413, Ser416 to Phe438, His440 to Leu462, Asn464 to Ser486, Ser488 to Cys510, Ser512 to Gln535, Glu536 to Gln559, and Asn560 to Gln582. N-linked (GlcNAc...) asparagine glycosylation is found at Asn112, Asn135, and Asn171. An N-linked (GlcNAc...) asparagine glycan is attached at Asn203. An N-linked (GlcNAc...) asparagine glycan is attached at Asn349. Residues Asn445, Asn464, Asn509, and Asn522 are each glycosylated (N-linked (GlcNAc...) asparagine). Asn565 carries an N-linked (GlcNAc...) asparagine glycan. Residues Val647–Leu667 traverse the membrane as a helical segment. At Asn668–Phe1016 the chain is on the cytoplasmic side. A Protein kinase domain is found at Leu726–Met1013. ATP is bound by residues Ile732 to Val740 and Lys755. 2 positions are modified to phosphotyrosine: Tyr841 and Tyr898.

It belongs to the protein kinase superfamily. Ser/Thr protein kinase family.

It is found in the membrane. The sequence is that of Probably inactive leucine-rich repeat receptor-like protein kinase At3g28040 from Arabidopsis thaliana (Mouse-ear cress).